A 238-amino-acid chain; its full sequence is Ribitol-5-phosphate cytidylyltransferase 1 (238 aa).

Residues 7–10 (LAGG) and 81–87 (GSDRNDT) contribute to the CTP site.

The protein belongs to the IspD/TarI cytidylyltransferase family. TarI subfamily.

The catalysed reaction is D-ribitol 5-phosphate + CTP + H(+) = CDP-L-ribitol + diphosphate. It participates in cell wall biogenesis; poly(ribitol phosphate) teichoic acid biosynthesis. Functionally, catalyzes the transfer of the cytidylyl group of CTP to D-ribitol 5-phosphate. The polypeptide is Ribitol-5-phosphate cytidylyltransferase 1 (Staphylococcus aureus (strain bovine RF122 / ET3-1)).